The sequence spans 606 residues: Transmembrane 9 superfamily member 1 (606 aa).

The first 27 residues, 1 to 27 (MTVLGYPRSWSCHCLPVLILLLGIGHG), serve as a signal peptide directing secretion. Asparagine 178 is a glycosylation site (N-linked (GlcNAc...) asparagine). 4 consecutive transmembrane segments (helical) span residues 237–257 (LSII…AVIL), 310–330 (VLGV…MALL), 339–359 (GAIN…SGYV), and 373–393 (VWNI…TWSV). N-linked (GlcNAc...) asparagine glycosylation is present at asparagine 401. 4 helical membrane-spanning segments follow: residues 412–432 (ILLL…IGGI), 469–489 (VGGF…FATV), 499–519 (GILF…SIAL), and 535–555 (SVLS…FYYA). Asparagine 559 carries an N-linked (GlcNAc...) asparagine glycan. Residues 570 to 590 (FGYSLLTGYVFFLMLGTISFF) traverse the membrane as a helical segment.

This sequence belongs to the nonaspanin (TM9SF) (TC 9.A.2) family.

Its subcellular location is the lysosome membrane. It localises to the cytoplasmic vesicle. The protein localises to the autophagosome membrane. Functionally, plays an essential role in autophagy. In Mus musculus (Mouse), this protein is Transmembrane 9 superfamily member 1 (Tm9sf1).